The following is a 301-amino-acid chain: UDP-N-acetylenolpyruvoylglucosamine reductase 1 (301 aa).

The FAD-binding PCMH-type domain maps to 29 to 196; that stretch reads KIGGPADILI…LEAEFQLQIG (168 aa). Arginine 174 is an active-site residue. Serine 225 (proton donor) is an active-site residue. Glutamate 295 is a catalytic residue.

The protein belongs to the MurB family. FAD serves as cofactor.

It is found in the cytoplasm. It catalyses the reaction UDP-N-acetyl-alpha-D-muramate + NADP(+) = UDP-N-acetyl-3-O-(1-carboxyvinyl)-alpha-D-glucosamine + NADPH + H(+). The protein operates within cell wall biogenesis; peptidoglycan biosynthesis. Functionally, cell wall formation. This Bacillus anthracis protein is UDP-N-acetylenolpyruvoylglucosamine reductase 1 (murB1).